We begin with the raw amino-acid sequence, 197 residues long: UPF0725 protein At5g41640 (197 aa).

This sequence belongs to the UPF0725 (EMB2204) family.

The sequence is that of UPF0725 protein At5g41640 from Arabidopsis thaliana (Mouse-ear cress).